The following is a 326-amino-acid chain: Aspartate carbamoyltransferase catalytic subunit (326 aa).

Carbamoyl phosphate is bound by residues arginine 65 and threonine 66. Residue lysine 93 coordinates L-aspartate. Residues arginine 115, histidine 143, and glutamine 146 each coordinate carbamoyl phosphate. 2 residues coordinate L-aspartate: arginine 176 and arginine 230. Residues glycine 271 and proline 272 each coordinate carbamoyl phosphate.

Belongs to the aspartate/ornithine carbamoyltransferase superfamily. ATCase family. In terms of assembly, heterododecamer (2C3:3R2) of six catalytic PyrB chains organized as two trimers (C3), and six regulatory PyrI chains organized as three dimers (R2).

It carries out the reaction carbamoyl phosphate + L-aspartate = N-carbamoyl-L-aspartate + phosphate + H(+). Its pathway is pyrimidine metabolism; UMP biosynthesis via de novo pathway; (S)-dihydroorotate from bicarbonate: step 2/3. Functionally, catalyzes the condensation of carbamoyl phosphate and aspartate to form carbamoyl aspartate and inorganic phosphate, the committed step in the de novo pyrimidine nucleotide biosynthesis pathway. The chain is Aspartate carbamoyltransferase catalytic subunit from Mesorhizobium japonicum (strain LMG 29417 / CECT 9101 / MAFF 303099) (Mesorhizobium loti (strain MAFF 303099)).